A 138-amino-acid polypeptide reads, in one-letter code: U1 small nuclear ribonucleoprotein C (138 aa).

The Matrin-type zinc-finger motif lies at 4–36 (YYCDYCDTFLTHDSPSVRKTHNNGRKHKENVRF). Residues 58–138 (QSKPNSQMPP…MGRPPMSLRS (81 aa)) form a disordered region. A compositionally biased stretch (pro residues) spans 67-109 (PNAPPGLMPPPGMLPPPGGMPPGRMPPQGLPFPPPGPIPPPPG). The span at 113–138 (MRPPHGQMHMGGPRPQMGRPPMSLRS) shows a compositional bias: low complexity.

It belongs to the U1 small nuclear ribonucleoprotein C family. U1 snRNP is composed of the 7 core Sm proteins B/B', D1, D2, D3, E, F and G that assemble in a heptameric protein ring on the Sm site of the small nuclear RNA to form the core snRNP, and at least 3 U1 snRNP-specific proteins U1-70K, U1-A and U1-C. U1-C interacts with U1 snRNA and the 5' splice-site region of the pre-mRNA.

The protein resides in the nucleus. Its function is as follows. Component of the spliceosomal U1 snRNP, which is essential for recognition of the pre-mRNA 5' splice-site and the subsequent assembly of the spliceosome. U1-C is directly involved in initial 5' splice-site recognition for both constitutive and regulated alternative splicing. The interaction with the 5' splice-site seems to precede base-pairing between the pre-mRNA and the U1 snRNA. Stimulates commitment or early (E) complex formation by stabilizing the base pairing of the 5' end of the U1 snRNA and the 5' splice-site region. In Nematostella vectensis (Starlet sea anemone), this protein is U1 small nuclear ribonucleoprotein C.